The following is a 700-amino-acid chain: Polyribonucleotide nucleotidyltransferase (700 aa).

Positions 486 and 492 each coordinate Mg(2+). A KH domain is found at 554 to 613; it reads PKIISTTINPDKIREVIGPGGKMINKIIDETGVKIDINDDGRVYIFSSDIQAGKRARSMI. An S1 motif domain is found at 623–691; sequence GQVFLGRVIR…KQGRVNLSRK (69 aa).

This sequence belongs to the polyribonucleotide nucleotidyltransferase family. The cofactor is Mg(2+).

It localises to the cytoplasm. It catalyses the reaction RNA(n+1) + phosphate = RNA(n) + a ribonucleoside 5'-diphosphate. Its function is as follows. Involved in mRNA degradation. Catalyzes the phosphorolysis of single-stranded polyribonucleotides processively in the 3'- to 5'-direction. This Acetivibrio thermocellus (strain ATCC 27405 / DSM 1237 / JCM 9322 / NBRC 103400 / NCIMB 10682 / NRRL B-4536 / VPI 7372) (Clostridium thermocellum) protein is Polyribonucleotide nucleotidyltransferase.